A 35-amino-acid chain; its full sequence is Photosystem II reaction center protein Psb30 (35 aa).

The chain crosses the membrane as a helical span at residues 7–27 (VFVQLLLLALIVLAGPAVILL).

This sequence belongs to the Psb30/Ycf12 family. As to quaternary structure, PSII is composed of 1 copy each of membrane proteins PsbA, PsbB, PsbC, PsbD, PsbE, PsbF, PsbH, PsbI, PsbJ, PsbK, PsbL, PsbM, PsbT, PsbX, PsbY, PsbZ, Psb30/Ycf12, peripheral proteins PsbO, CyanoQ (PsbQ), PsbU, PsbV and a large number of cofactors. It forms dimeric complexes.

It is found in the cellular thylakoid membrane. Functionally, a core subunit of photosystem II (PSII), probably helps stabilize the reaction center. The sequence is that of Photosystem II reaction center protein Psb30 from Synechococcus sp. (strain JA-3-3Ab) (Cyanobacteria bacterium Yellowstone A-Prime).